Here is a 421-residue protein sequence, read N- to C-terminus: Histidine--tRNA ligase (421 aa).

It belongs to the class-II aminoacyl-tRNA synthetase family. As to quaternary structure, homodimer.

It is found in the cytoplasm. The catalysed reaction is tRNA(His) + L-histidine + ATP = L-histidyl-tRNA(His) + AMP + diphosphate + H(+). This Coxiella burnetii (strain Dugway 5J108-111) protein is Histidine--tRNA ligase.